A 233-amino-acid polypeptide reads, in one-letter code: Large ribosomal subunit protein uL1 (233 aa).

This sequence belongs to the universal ribosomal protein uL1 family. As to quaternary structure, part of the 50S ribosomal subunit.

Binds directly to 23S rRNA. The L1 stalk is quite mobile in the ribosome, and is involved in E site tRNA release. Functionally, protein L1 is also a translational repressor protein, it controls the translation of the L11 operon by binding to its mRNA. This is Large ribosomal subunit protein uL1 from Thermotoga maritima (strain ATCC 43589 / DSM 3109 / JCM 10099 / NBRC 100826 / MSB8).